An 83-amino-acid polypeptide reads, in one-letter code: Large ribosomal subunit protein bL31B (83 aa).

It belongs to the bacterial ribosomal protein bL31 family. Type B subfamily. As to quaternary structure, part of the 50S ribosomal subunit.

The chain is Large ribosomal subunit protein bL31B from Bacteroides fragilis (strain ATCC 25285 / DSM 2151 / CCUG 4856 / JCM 11019 / LMG 10263 / NCTC 9343 / Onslow / VPI 2553 / EN-2).